A 1766-amino-acid polypeptide reads, in one-letter code: DNA-directed RNA polymerase II subunit RPB1-B (1766 aa).

Cys-69, Cys-72, Cys-79, and His-82 together coordinate Zn(2+). 3 residues coordinate Mg(2+): Asp-487, Asp-489, and Asp-491. The bridging helix stretch occupies residues 813–825 (PHEFFFHTMAGRE). The segment at 1660–1766 (HAMSSAAPPS…EFGDEEEEEQ (107 aa)) is disordered. Over residues 1706-1716 (RGDEPSTHRSD) the composition is skewed to basic and acidic residues. The segment covering 1742–1756 (PTAKTPQQAAPPTAA) has biased composition (low complexity).

Belongs to the RNA polymerase beta' chain family. In terms of assembly, component of the RNA polymerase II (Pol II) complex consisting of 12 subunits.

The protein localises to the nucleus. It catalyses the reaction RNA(n) + a ribonucleoside 5'-triphosphate = RNA(n+1) + diphosphate. Its function is as follows. DNA-dependent RNA polymerase catalyzes the transcription of DNA into RNA using the four ribonucleoside triphosphates as substrates. Largest and catalytic component of RNA polymerase II which synthesizes mRNA precursors and many functional non-coding RNAs. Forms the polymerase active center together with the second largest subunit. Pol II is the central component of the basal RNA polymerase II transcription machinery. It is composed of mobile elements that move relative to each other. RPB1 is part of the core element with the central large cleft, the clamp element that moves to open and close the cleft and the jaws that are thought to grab the incoming DNA template. At the start of transcription, a single-stranded DNA template strand of the promoter is positioned within the central active site cleft of Pol II. A bridging helix emanates from RPB1 and crosses the cleft near the catalytic site and is thought to promote translocation of Pol II by acting as a ratchet that moves the RNA-DNA hybrid through the active site by switching from straight to bent conformations at each step of nucleotide addition. During transcription elongation, Pol II moves on the template as the transcript elongates. This Trypanosoma brucei brucei protein is DNA-directed RNA polymerase II subunit RPB1-B (TRP5.9).